The chain runs to 151 residues: uncharacterized protein (151 aa).

The next 4 helical transmembrane spans lie at 8-28 (GIGS…EFFE), 60-80 (WHVA…GVLT), 82-102 (FSAL…HADS), and 113-133 (LPLI…GKLS).

It belongs to the DoxX family.

It is found in the cell membrane. This is an uncharacterized protein from Haemophilus influenzae (strain ATCC 51907 / DSM 11121 / KW20 / Rd).